Consider the following 172-residue polypeptide: Ribosome maturation factor RimM (172 aa).

Positions 96–168 (EGEFYYHEII…RVDVEIPEGL (73 aa)) constitute a PRC barrel domain.

The protein belongs to the RimM family. In terms of assembly, binds ribosomal protein uS19.

Its subcellular location is the cytoplasm. Its function is as follows. An accessory protein needed during the final step in the assembly of 30S ribosomal subunit, possibly for assembly of the head region. Essential for efficient processing of 16S rRNA. May be needed both before and after RbfA during the maturation of 16S rRNA. It has affinity for free ribosomal 30S subunits but not for 70S ribosomes. The sequence is that of Ribosome maturation factor RimM from Streptococcus gordonii (strain Challis / ATCC 35105 / BCRC 15272 / CH1 / DL1 / V288).